A 364-amino-acid polypeptide reads, in one-letter code: tRNA N6-adenosine threonylcarbamoyltransferase (364 aa).

The Fe cation site is built by His-118 and His-122. Substrate contacts are provided by residues 140 to 144 (LVSGG), Asp-173, Gly-186, and Asn-288. Asp-316 contacts Fe cation.

The protein belongs to the KAE1 / TsaD family. Fe(2+) is required as a cofactor.

It is found in the cytoplasm. It carries out the reaction L-threonylcarbamoyladenylate + adenosine(37) in tRNA = N(6)-L-threonylcarbamoyladenosine(37) in tRNA + AMP + H(+). Its function is as follows. Required for the formation of a threonylcarbamoyl group on adenosine at position 37 (t(6)A37) in tRNAs that read codons beginning with adenine. Is involved in the transfer of the threonylcarbamoyl moiety of threonylcarbamoyl-AMP (TC-AMP) to the N6 group of A37, together with TsaE and TsaB. TsaD likely plays a direct catalytic role in this reaction. This is tRNA N6-adenosine threonylcarbamoyltransferase from Cereibacter sphaeroides (strain KD131 / KCTC 12085) (Rhodobacter sphaeroides).